The following is a 310-amino-acid chain: MRKTSSPRIAPSEITPRDLYHDRRRFMQAAAGAAAAALWPHWLSAGEKLPGVRKTDHVLPDALTPFEDVAHYNNFYEFGTDKETPSRTAGSLKTRPWTVSVEGEVQKPKLFDVDDLLKLAPLEERIYRLRCVEGWSMVVPWVGFPLAELIKRVEPTGNAKFVEFITLYDPARMPGQKSSVLDWPYREALRLDEAMHPLTLLVFGLYGEVLPNQNGAPVRVVVPWKYGFKSAKSIVRIRFVEQQPVSTWTRAVPSEYGFYANVNPQVDHPRWSQAKERRLGEFFKRPTLMFNGYAEQVAHLYAGMDLKKFF.

A signal peptide (tat-type signal) is located at residues 1–45; that stretch reads MRKTSSPRIAPSEITPRDLYHDRRRFMQAAAGAAAAALWPHWLSA. Mo-molybdopterin is bound by residues N73, 76-77, C131, T166, N214, R219, and 230-232; these read YE and SAK.

It belongs to the MsrP family. In terms of assembly, heterodimer of a catalytic subunit (MsrP) and a heme-binding subunit (MsrQ). It depends on Mo-molybdopterin as a cofactor. In terms of processing, predicted to be exported by the Tat system. The position of the signal peptide cleavage has not been experimentally proven.

The protein localises to the periplasm. It catalyses the reaction L-methionyl-[protein] + a quinone + H2O = L-methionyl-(S)-S-oxide-[protein] + a quinol. The catalysed reaction is L-methionyl-[protein] + a quinone + H2O = L-methionyl-(R)-S-oxide-[protein] + a quinol. In terms of biological role, part of the MsrPQ system that repairs oxidized periplasmic proteins containing methionine sulfoxide residues (Met-O), using respiratory chain electrons. Thus protects these proteins from oxidative-stress damage caused by reactive species of oxygen and chlorine generated by the host defense mechanisms. MsrPQ is essential for the maintenance of envelope integrity under bleach stress, rescuing a wide series of structurally unrelated periplasmic proteins from methionine oxidation. The catalytic subunit MsrP is non-stereospecific, being able to reduce both (R-) and (S-) diastereoisomers of methionine sulfoxide. The polypeptide is Protein-methionine-sulfoxide reductase catalytic subunit MsrP (Methylococcus capsulatus (strain ATCC 33009 / NCIMB 11132 / Bath)).